We begin with the raw amino-acid sequence, 382 residues long: Threonine synthase (382 aa).

Lys93 is subject to N6-(pyridoxal phosphate)lysine. Residues Asn119, Gly219–Asn223, and Thr347 contribute to the pyridoxal 5'-phosphate site.

It belongs to the threonine synthase family. Pyridoxal 5'-phosphate serves as cofactor.

The catalysed reaction is O-phospho-L-homoserine + H2O = L-threonine + phosphate. It functions in the pathway amino-acid biosynthesis; L-threonine biosynthesis; L-threonine from L-aspartate: step 5/5. Catalyzes the gamma-elimination of phosphate from L-phosphohomoserine and the beta-addition of water to produce L-threonine. The sequence is that of Threonine synthase (thrC) from Synechocystis sp. (strain ATCC 27184 / PCC 6803 / Kazusa).